Consider the following 2150-residue polypeptide: Zinc finger protein sdc-3 (2150 aa).

The segment at 443-987 (QEITSPMFAL…DQVENEEPER (545 aa)) is dosage compensation domain 1. 4 disordered regions span residues 874–894 (EKEW…EEED), 1261–1373 (GSVV…GPEV), 1411–1448 (FETS…GPIN), and 1491–1670 (EVLQ…SEKL). The span at 1267-1293 (TNQQEENVTSEGPTLQEGSSIPSSSHI) shows a compositional bias: polar residues. Positions 1321–1333 (KKSGKTTRGRPKK) are enriched in basic residues. Residues 1347–1357 (GQKEEAAHEPE) are compositionally biased toward basic and acidic residues. The span at 1504–1524 (SSKKRGRRRKKTPPHIAKARK) shows a compositional bias: basic residues. Residues 1508–1516 (RGRRRKKTP) form a sex determination domain region. Residues 1585 to 1598 (EDLHETERPGHVGE) are compositionally biased toward basic and acidic residues. The segment covering 1638-1648 (IQSQAGTNASP) has biased composition (polar residues). 2 C2H2-type zinc fingers span residues 2078–2105 (HKCV…GKLH) and 2117–2141 (DDCQ…NHHH). Residues 2080 to 2105 (CVQCSIRNQSVYFSSYSLLELHGKLH) are dosage compensation domain 2.

As to quaternary structure, component of the SDC complex, which consists of sdc-1, sdc-2 and sdc-3. Within the complex, interacts with sdc-1 and sdc-2. Interacts with dpy-21. Sumoylated. Sumoylation is important for assembly of the dosage compensation complex and its robust binding to the X chromosome. In terms of tissue distribution, expressed in somatic and in germline tissues in hermaphrodites (XX). In males (XO), only present in embryos younger than the 100-cell stage (at protein level).

Its subcellular location is the chromosome. It localises to the nucleus. Component of the SDC complex that functions in sex determination and in X chromosome dosage compensation specifically in hermaphrodite (XX) animals. Plays a central role in the recruitment of the condensin I-like dosage compensation complex to the male sex-determining autosomal gene her-1, thereby contributing to its repression and initiating hermaphrodite sexual development. Involved in the recruitment and assembly of the dosage compensation complex and the dosage compensation protein dpy-21 onto the X chromosomes in hermaphrodites, which leads to a reduction of X-linked gene transcription and an equalization of X-linked gene expression between the sexes. In Caenorhabditis elegans, this protein is Zinc finger protein sdc-3 (sdc-3).